A 241-amino-acid polypeptide reads, in one-letter code: Triosephosphate isomerase (241 aa).

9-11 (NWK) lines the substrate pocket. Histidine 96 (electrophile) is an active-site residue. The Proton acceptor role is filled by glutamate 165. Substrate is bound by residues glycine 171, serine 204, and 225 to 226 (GG).

This sequence belongs to the triosephosphate isomerase family. In terms of assembly, homodimer.

The protein localises to the cytoplasm. The enzyme catalyses D-glyceraldehyde 3-phosphate = dihydroxyacetone phosphate. It participates in carbohydrate biosynthesis; gluconeogenesis. Its pathway is carbohydrate degradation; glycolysis; D-glyceraldehyde 3-phosphate from glycerone phosphate: step 1/1. In terms of biological role, involved in the gluconeogenesis. Catalyzes stereospecifically the conversion of dihydroxyacetone phosphate (DHAP) to D-glyceraldehyde-3-phosphate (G3P). This Gloeothece citriformis (strain PCC 7424) (Cyanothece sp. (strain PCC 7424)) protein is Triosephosphate isomerase.